Reading from the N-terminus, the 260-residue chain is Putative ABC transporter ATP-binding protein PYRAB01300 (260 aa).

An ABC transporter domain is found at 2–234 (IEFKDVWFWY…DLRNFSLVEP (233 aa)). Position 34 to 41 (34 to 41 (GPNGSGKT)) interacts with ATP.

Belongs to the ABC transporter superfamily.

The protein localises to the cell membrane. In terms of biological role, probably part of an ABC transporter complex. Responsible for energy coupling to the transport system. This chain is Putative ABC transporter ATP-binding protein PYRAB01300, found in Pyrococcus abyssi (strain GE5 / Orsay).